The primary structure comprises 241 residues: Small ribosomal subunit protein bS6 (241 aa).

Residues 97–108 show a composition bias toward basic residues; the sequence is KPKIRERNRKYT. Disordered stretches follow at residues 97 to 187 and 199 to 241; these read KPKI…HREN and NKNH…QSSN. The span at 109–118 shows a compositional bias: basic and acidic residues; that stretch reads PRRDRFDKPN. 3 stretches are compositionally biased toward low complexity: residues 130-151, 161-180, and 199-210; these read QDQQ…QTSQ, DDFQ…QQNQ, and NKNHQNQTSQTQ.

This sequence belongs to the bacterial ribosomal protein bS6 family.

Binds together with bS18 to 16S ribosomal RNA. The polypeptide is Small ribosomal subunit protein bS6 (Mesomycoplasma hyopneumoniae (strain 7448) (Mycoplasma hyopneumoniae)).